Here is a 303-residue protein sequence, read N- to C-terminus: Elongation factor Ts (303 aa).

Residues 81-84 (TDFV) form an involved in Mg(2+) ion dislocation from EF-Tu region.

Belongs to the EF-Ts family.

Its subcellular location is the cytoplasm. Functionally, associates with the EF-Tu.GDP complex and induces the exchange of GDP to GTP. It remains bound to the aminoacyl-tRNA.EF-Tu.GTP complex up to the GTP hydrolysis stage on the ribosome. The chain is Elongation factor Ts from Mesomycoplasma hyopneumoniae (strain 7448) (Mycoplasma hyopneumoniae).